We begin with the raw amino-acid sequence, 140 residues long: L-fucose mutarotase (140 aa).

The active-site Proton donor is histidine 22. Residues aspartate 30, arginine 107, and 129 to 131 (YGN) each bind substrate.

The protein belongs to the RbsD / FucU family. FucU mutarotase subfamily. As to quaternary structure, homodecamer.

It is found in the cytoplasm. It carries out the reaction alpha-L-fucose = beta-L-fucose. It functions in the pathway carbohydrate metabolism; L-fucose metabolism. Its function is as follows. Involved in the anomeric conversion of L-fucose. This chain is L-fucose mutarotase, found in Citrobacter koseri (strain ATCC BAA-895 / CDC 4225-83 / SGSC4696).